The sequence spans 277 residues: Urease accessory protein UreD (277 aa).

This sequence belongs to the UreD family. UreD, UreF and UreG form a complex that acts as a GTP-hydrolysis-dependent molecular chaperone, activating the urease apoprotein by helping to assemble the nickel containing metallocenter of UreC. The UreE protein probably delivers the nickel.

It localises to the cytoplasm. In terms of biological role, required for maturation of urease via the functional incorporation of the urease nickel metallocenter. The polypeptide is Urease accessory protein UreD (Pseudomonas putida (strain ATCC 47054 / DSM 6125 / CFBP 8728 / NCIMB 11950 / KT2440)).